Consider the following 166-residue polypeptide: Protein-export protein SecB (166 aa).

The protein belongs to the SecB family. Homotetramer, a dimer of dimers. One homotetramer interacts with 1 SecA dimer.

Its subcellular location is the cytoplasm. Its function is as follows. One of the proteins required for the normal export of preproteins out of the cell cytoplasm. It is a molecular chaperone that binds to a subset of precursor proteins, maintaining them in a translocation-competent state. It also specifically binds to its receptor SecA. The protein is Protein-export protein SecB of Cereibacter sphaeroides (strain ATCC 17029 / ATH 2.4.9) (Rhodobacter sphaeroides).